Reading from the N-terminus, the 658-residue chain is tRNA uridine 5-carboxymethylaminomethyl modification enzyme MnmG (658 aa).

Residue 13–18 (GAGHAG) coordinates FAD. 285–299 (GPRYCPSVEDKINRF) contributes to the NAD(+) binding site.

Belongs to the MnmG family. As to quaternary structure, homodimer. Heterotetramer of two MnmE and two MnmG subunits. The cofactor is FAD.

The protein localises to the cytoplasm. In terms of biological role, NAD-binding protein involved in the addition of a carboxymethylaminomethyl (cmnm) group at the wobble position (U34) of certain tRNAs, forming tRNA-cmnm(5)s(2)U34. This Verminephrobacter eiseniae (strain EF01-2) protein is tRNA uridine 5-carboxymethylaminomethyl modification enzyme MnmG.